The primary structure comprises 360 residues: Glycoprotein-N-acetylgalactosamine 3-beta-galactosyltransferase 1 (360 aa).

Topologically, residues 1 to 7 (MSIICAK) are cytoplasmic. A helical; Signal-anchor for type II membrane protein transmembrane segment spans residues 8 to 28 (VAWLPLTLGTAMGFLITFYLA). Residues 29–360 (RTLLERNSQP…SDFLEPPMES (332 aa)) lie on the Lumenal side of the membrane. A disulfide bond links C79 and C103. UDP is bound by residues M82, E126, G127, R128, and K134. The N-linked (GlcNAc...) asparagine glycan is linked to N148. D157 lines the UDP pocket. Mn(2+)-binding residues include D157 and D159. N-linked (GlcNAc...) asparagine glycosylation is present at N173. A disulfide bond links C220 and C234. Residue W274 coordinates a glycoprotein. An intrachain disulfide couples C289 to C290. Residues H298 and Y299 each contribute to the UDP site. A Mn(2+)-binding site is contributed by H298. 2 N-linked (GlcNAc...) asparagine glycosylation sites follow: N341 and N347.

Belongs to the glycosyltransferase 31 family. Beta3-Gal-T subfamily. In terms of assembly, homodimer; disulfide-linked. Requires Mn(2+) as cofactor.

It localises to the membrane. It catalyses the reaction an N-acetyl-alpha-D-galactosaminyl derivative + UDP-alpha-D-galactose = a beta-D-galactosyl-(1-&gt;3)-N-acetyl-alpha-D-galactosaminyl derivative + UDP + H(+). Its pathway is protein modification; protein glycosylation. Glycosyltransferase that generates the core 1 O-glycan Gal-beta1-3GalNAc-alpha1-Ser/Thr (T antigen), which is a precursor for many extended O-glycans in glycoproteins. In Xenopus laevis (African clawed frog), this protein is Glycoprotein-N-acetylgalactosamine 3-beta-galactosyltransferase 1 (c1galt1).